Reading from the N-terminus, the 358-residue chain is 3-isopropylmalate dehydrogenase (358 aa).

Substrate is bound by residues arginine 92, arginine 102, arginine 130, and aspartate 224. Mg(2+)-binding residues include aspartate 224, aspartate 248, and aspartate 252. 282–294 (GSAPDIAGQGIAN) is a binding site for NAD(+).

Belongs to the isocitrate and isopropylmalate dehydrogenases family. LeuB type 1 subfamily. In terms of assembly, homodimer. The cofactor is Mg(2+). It depends on Mn(2+) as a cofactor.

It is found in the cytoplasm. The catalysed reaction is (2R,3S)-3-isopropylmalate + NAD(+) = 4-methyl-2-oxopentanoate + CO2 + NADH. It participates in amino-acid biosynthesis; L-leucine biosynthesis; L-leucine from 3-methyl-2-oxobutanoate: step 3/4. In terms of biological role, catalyzes the oxidation of 3-carboxy-2-hydroxy-4-methylpentanoate (3-isopropylmalate) to 3-carboxy-4-methyl-2-oxopentanoate. The product decarboxylates to 4-methyl-2 oxopentanoate. In Bordetella pertussis (strain Tohama I / ATCC BAA-589 / NCTC 13251), this protein is 3-isopropylmalate dehydrogenase.